The sequence spans 700 residues: Choline transporter-like protein 5-B (700 aa).

Topologically, residues 1-4 are cytoplasmic; it reads GCTD. A helical transmembrane segment spans residues 5–25; it reads VLCCVIFVIVILGYIVLGTVA. At 26–209 the chain is on the extracellular side; sequence WMHGDPRKVV…KIFEDYASSW (184 aa). N-linked (GlcNAc...) asparagine glycosylation is found at Asn-157 and Asn-164. The helical transmembrane segment at 210–230 threads the bilayer; the sequence is FWILIGLVISMLVSLVFILLL. Residues 231–233 lie on the Cytoplasmic side of the membrane; that stretch reads RFT. Residues 234–254 form a helical membrane-spanning segment; the sequence is AGVLFWLVIFGVIAAVGYGIW. Residues 255–292 are Extracellular-facing; sequence HCYWEYSSLKGKPDSDVTISDIGFQTDFRVYLQLSQTW. A helical transmembrane segment spans residues 293 to 313; the sequence is LIFMTSLAVIEAIIILVLIFL. Residues 314–341 lie on the Cytoplasmic side of the membrane; it reads RNRVRIAIALLKEGSKAIGCIMSTLFYP. Residues 342 to 362 form a helical membrane-spanning segment; that stretch reads IITFLLLALCIAYWAVTAVFL. At 363–432 the chain is on the extracellular side; it reads ASSGEAVYKV…LQLCNLLVFL (70 aa). Residues Asn-383 and Asn-395 are each glycosylated (N-linked (GlcNAc...) asparagine). Residues 433 to 455 traverse the membrane as a helical segment; sequence WLVNFTIALGQCTLAGAFAAYYW. Over 456-482 the chain is Cytoplasmic; it reads ALRKPADIPPCPLASSFGRALRYHTGS. A helical membrane pass occupies residues 483-503; the sequence is LAFGALILSIVQFIRIILEYL. The Extracellular portion of the chain corresponds to 504–541; it reads DHKLKGAHNAFTRFLLCCLKCCFWCLEHFIKFMNRNAY. Residues 542-562 traverse the membrane as a helical segment; the sequence is IMISIYGKNFCTSARDAFFLL. The Cytoplasmic portion of the chain corresponds to 563–577; the sequence is MRNVMRVAVLDKVTD. The helical transmembrane segment at 578–598 threads the bilayer; that stretch reads FLLFLGKLLISGSVGVLAFFF. Topologically, residues 599–616 are extracellular; sequence FTRQIPVIQEEVPSLNYY. A helical transmembrane segment spans residues 617–637; sequence WVPLLTVIFGSYMIAHGFFNV. Residues 638–687 lie on the Cytoplasmic side of the membrane; the sequence is YAMCVDTLFLCFLLDLEKNDGSATRPYYMCSSLRAILNKKNQKRPKETKR. Positions 676–700 are disordered; the sequence is KKNQKRPKETKRGRKQKKEQPKSRH. The segment covering 677–692 has biased composition (basic residues); the sequence is KNQKRPKETKRGRKQK.

It belongs to the CTL (choline transporter-like) family.

It is found in the cell membrane. It catalyses the reaction choline(out) + n H(+)(in) = choline(in) + n H(+)(out). Functionally, choline/H+ antiporter. This is Choline transporter-like protein 5-B (slc44a5b) from Danio rerio (Zebrafish).